A 150-amino-acid polypeptide reads, in one-letter code: UPF0756 membrane protein CGSHiEE_06715 (150 aa).

4 consecutive transmembrane segments (helical) span residues 1-21, 52-72, 81-101, and 123-143; these read MTLQLNTIALLLVILLILGVL, YGVKIGIIILTIGVLSPLVSG, GFVSWKMALSISVGVLVAWLA, and IIGVAFLGGIPVGPLIAAGIL.

This sequence belongs to the UPF0756 family.

The protein localises to the cell membrane. This Haemophilus influenzae (strain PittEE) protein is UPF0756 membrane protein CGSHiEE_06715.